The following is a 124-amino-acid chain: Small ribosomal subunit protein bS6 (124 aa).

The disordered stretch occupies residues K93–S124. Positions T105–Q115 are enriched in basic and acidic residues.

Belongs to the bacterial ribosomal protein bS6 family.

In terms of biological role, binds together with bS18 to 16S ribosomal RNA. In Variovorax paradoxus (strain S110), this protein is Small ribosomal subunit protein bS6.